Consider the following 993-residue polypeptide: Glycogen phosphorylase 2 (993 aa).

The disordered stretch occupies residues 1–82 (MEEKRSTNSP…SNQSEDPATQ (82 aa)). The segment covering 19–48 (RSGSITSATSHPPRSNSNPKLVAKHQQQLY) has biased composition (polar residues). The segment covering 58-77 (EQQNQQPQQQQQKQTSNQSE) has biased composition (low complexity). K763 carries the N6-(pyridoxal phosphate)lysine modification. The span at 962–981 (VISGGDKTNNTLKPKQTTKG) shows a compositional bias: polar residues. The disordered stretch occupies residues 962-993 (VISGGDKTNNTLKPKQTTKGFNIGGQPGNPTN). The span at 983-993 (NIGGQPGNPTN) shows a compositional bias: gly residues.

Belongs to the glycogen phosphorylase family. As to quaternary structure, homodimer. Pyridoxal 5'-phosphate serves as cofactor. The N-terminus is blocked. Post-translationally, enzyme activity requires processing of the 113 kDa peptide to an enzymatically active 106 kDa form of the protein. Processing would occur near the middle of the Gln-rich repetitive element.

The catalysed reaction is [(1-&gt;4)-alpha-D-glucosyl](n) + phosphate = [(1-&gt;4)-alpha-D-glucosyl](n-1) + alpha-D-glucose 1-phosphate. Its function is as follows. Phosphorylase is an important allosteric enzyme in carbohydrate metabolism. Enzymes from different sources differ in their regulatory mechanisms and in their natural substrates. However, all known phosphorylases share catalytic and structural properties. In Dictyostelium discoideum (Social amoeba), this protein is Glycogen phosphorylase 2 (glpD).